Consider the following 150-residue polypeptide: UPF0540 protein At1g62080 (150 aa).

The N-terminal stretch at 1 to 21 (MNATKFLVLLVIGVLCAIVTA) is a signal peptide. Residues 119-135 (AAAARAKGKVASASRVK) are compositionally biased toward low complexity. Residues 119-150 (AAAARAKGKVASASRVKGSSEKKKKDRKGKKD) form a disordered region.

Belongs to the UPF0540 family.

The sequence is that of UPF0540 protein At1g62080 from Arabidopsis thaliana (Mouse-ear cress).